Reading from the N-terminus, the 1040-residue chain is Exosome RNA helicase MTR4 (1040 aa).

An N-acetylalanine modification is found at Ala-2. Positions 16-77 are disordered; sequence DSTSAAGAKK…GTDEPIFGKK (62 aa). Residues 23-33 are compositionally biased toward basic and acidic residues; sequence AKKDKEKEKWK. Lys-24 participates in a covalent cross-link: Glycyl lysine isopeptide (Lys-Gly) (interchain with G-Cter in SUMO2). Phosphoserine is present on Ser-38. Residues 41–50 show a composition bias toward basic and acidic residues; it reads KAGKRLDTKL. 2 positions are modified to N6-acetyllysine: Lys-49 and Lys-76. ATP-binding positions include Ile-137, 159–166, Ser-162, Gly-164, Lys-165, and Thr-166; that span reads AHTSAGKT. Residues 146–302 form the Helicase ATP-binding domain; that stretch reads IQCVDNNQSV…WICHLHKQPC (157 aa). The DEIH box signature appears at 250 to 253; it reads DEIH. Lys-356 participates in a covalent cross-link: Glycyl lysine isopeptide (Lys-Gly) (interchain with G-Cter in SUMO2). One can recognise a Helicase C-terminal domain in the interval 403–575; sequence QMTKLDFNTD…NMVLNLLRVE (173 aa). Residues Lys-682 and Lys-721 each participate in a glycyl lysine isopeptide (Lys-Gly) (interchain with G-Cter in SUMO2) cross-link.

It belongs to the helicase family. SKI2 subfamily. In terms of assembly, component of a TRAMP-like complex, an ATP-dependent exosome regulatory complex consisting of a helicase (MTREX), an oligadenylate polymerase (TENT4B or TENT4A), and a substrate specific RNA-binding factor (ZCCHC7 or ZCCHC8). Several TRAMP-like complexes exist with specific compositions and are associated with nuclear, or nucleolar RNA exosomes. Identified in the spliceosome C complex. Component of the poly(A) tail exosome targeting (PAXT) complex made of PABPN1, ZFC3H1 and MTREX that directs a subset of long and polyadenylated poly(A) RNAs for exosomal degradation. Component of the nuclear exosome targeting (NEXT) complex composed of MTREX, ZCCHC8, and RBM7 that directs a subset of non-coding short-lived RNAs for exosomal degradation. Interacts with ZCCHC8; this interaction bridges the interaction between RBM7 and MTREX. Binds to ZFC3H1 and RBM7 in a RNase-insensitive manner. Interacts with EXOSC10; the interaction mediates the association of MTREX with nuclear RNA exosomes. Interacts with isoform 1 of NVL in an ATP-dependent manner; the interaction is required to associate NVL with nuclear RNA exosome. Interacts with WDR74; the interaction dissociation in a late stage of rRNA synthesis is required for appropriate maturation of pre-60S particles and depends on the ATPase activity of NVL. Interacts with MPHOSPH6. Interacts with the RNA cap-binding complex proteins NCBP1 and SRRT. Interacts with NRDE2; the interaction is direct and negatively regulates MTREX function in exosomal degradation by changing its conformation precluding interaction with ZFC3H1, the RNA cap-binding complex proteins NCBP1 and SRRT, and association with the exosome. Associates with the RNA exosome complex.

The protein localises to the nucleus. It is found in the nucleoplasm. Its subcellular location is the nucleolus. It localises to the nucleus speckle. The enzyme catalyses ATP + H2O = ADP + phosphate + H(+). With respect to regulation, activated when MTREX is incorporated into NEXT complex an the nuclear RNA exosome complex. In terms of biological role, catalyzes the ATP-dependent unwinding of RNA duplexes with a single-stranded 3' RNA extension. Central subunit of many protein complexes, namely TRAMP-like, nuclear exosome targeting (NEXT) and poly(A) tail exosome targeting (PAXT). NEXT functions as an RNA exosome cofactor that directs a subset of non-coding short-lived RNAs for exosomal degradation. NEXT is involved in surveillance and turnover of aberrant transcripts and non-coding RNAs. PAXT directs a subset of long and polyadenylated poly(A) RNAs for exosomal degradation. The RNA exosome is fundamental for the degradation of RNA in eukaryotic nuclei. Substrate targeting is facilitated by its cofactor ZCCHC8, which links to RNA-binding protein adapters. Associated with the RNA exosome complex and involved in the 3'-processing of the 7S pre-RNA to the mature 5.8S rRNA. May be involved in pre-mRNA splicing. In the context of NEXT complex can also in vitro unwind DNA:RNA heteroduplexes with a 3' poly (A) RNA tracking strand. Can promote unwinding and degradation of structured RNA substrates when associated with the nuclear exosome and its cofactors. Can displace a DNA strand while translocating on RNA to ultimately degrade the RNA within a DNA/RNA heteroduplex. Plays a role in DNA damage response. The protein is Exosome RNA helicase MTR4 of Mus musculus (Mouse).